The primary structure comprises 85 residues: Small ribosomal subunit protein bS16 (85 aa).

Belongs to the bacterial ribosomal protein bS16 family.

The polypeptide is Small ribosomal subunit protein bS16 (Pseudomonas savastanoi pv. phaseolicola (strain 1448A / Race 6) (Pseudomonas syringae pv. phaseolicola (strain 1448A / Race 6))).